Here is a 726-residue protein sequence, read N- to C-terminus: Catalase-peroxidase (726 aa).

Residues 1-33 are disordered; the sequence is MSTSDDIHNTTATGKCPFHQGGHDQSAGGGTTT. A cross-link (tryptophyl-tyrosyl-methioninium (Trp-Tyr) (with M-252)) is located at residues 105 to 226; sequence WHGAGTYRSI…LGATEMGLIY (122 aa). His106 acts as the Proton acceptor in catalysis. A cross-link (tryptophyl-tyrosyl-methioninium (Tyr-Met) (with W-105)) is located at residues 226-252; it reads YVNPEGPDHSGEPLSAAAAIRATFGNM. Residue His267 participates in heme b binding.

This sequence belongs to the peroxidase family. Peroxidase/catalase subfamily. Homodimer or homotetramer. Requires heme b as cofactor. Formation of the three residue Trp-Tyr-Met cross-link is important for the catalase, but not the peroxidase activity of the enzyme.

The enzyme catalyses H2O2 + AH2 = A + 2 H2O. The catalysed reaction is 2 H2O2 = O2 + 2 H2O. Bifunctional enzyme with both catalase and broad-spectrum peroxidase activity. This chain is Catalase-peroxidase, found in Escherichia coli O1:K1 / APEC.